The following is a 229-amino-acid chain: 2,3-bisphosphoglycerate-dependent phosphoglycerate mutase 2 (229 aa).

Residues 12-19, 25-26, R65, 92-95, K103, and 119-120 contribute to the substrate site; these read RHGESVAN, TG, ERHY, and RR. The Tele-phosphohistidine intermediate role is filled by H13. The active-site Proton donor/acceptor is the E92.

It belongs to the phosphoglycerate mutase family. BPG-dependent PGAM subfamily.

It catalyses the reaction (2R)-2-phosphoglycerate = (2R)-3-phosphoglycerate. It participates in carbohydrate degradation; glycolysis; pyruvate from D-glyceraldehyde 3-phosphate: step 3/5. Functionally, catalyzes the interconversion of 2-phosphoglycerate and 3-phosphoglycerate. This Lactobacillus johnsonii (strain CNCM I-12250 / La1 / NCC 533) protein is 2,3-bisphosphoglycerate-dependent phosphoglycerate mutase 2.